The chain runs to 1162 residues: Protein OBERON 4 (1162 aa).

Composition is skewed to basic and acidic residues over residues 1-19 (MKRL…KNVD), 61-77 (NRDL…HRSE), 90-99 (FRSERERPNR), and 118-134 (VDDR…DRSL). Disordered stretches follow at residues 1–235 (MKRL…PSCS), 251–307 (IGKS…VSQN), 321–346 (DHRD…DKDE), and 441–485 (SKTE…QSGV). The segment covering 135–146 (KSPSWSRDSPNE) has biased composition (polar residues). A compositionally biased stretch (basic and acidic residues) spans 148 to 157 (SKFKPLDSRN). Positions 163–182 (KSLASPTWSKDSGSEQSKSV) are enriched in polar residues. Over residues 203 to 213 (EMEEGELEPEP) the composition is skewed to acidic residues. 4 stretches are compositionally biased toward basic and acidic residues: residues 225-235 (TKHDCKLPSCS), 263-300 (SNRE…HATE), 336-346 (DTVDEKGDKDE), and 441-457 (SKTE…KDDN). The segment at 835–899 (ACMCLVCSNF…QFHCVACNHP (65 aa)) adopts a PHD-type zinc-finger fold. Residues 1065–1161 (MKQAEAEMFQ…KMEMTKQSLA (97 aa)) adopt a coiled-coil conformation.

Self-interacts. Interacts with OBE1 and OBE2. Interacts with OBE3.

The protein resides in the nucleus. Probable transcription factor that functions redundantly with OBE3 in specification of the hypophysis and establishment of the embryonic root. Involved in the activation of ARF5/MP-dependent gene expression during embryonic root meristem initiation. Involved in shoot meristem homeostasis. This Arabidopsis thaliana (Mouse-ear cress) protein is Protein OBERON 4.